The following is a 649-amino-acid chain: 2-hydroxyacyl-CoA lyase 2 (649 aa).

Residues 2–21 (FHLIPFVVAFLLVFLTWFLI) form a helical membrane-spanning segment. Residue Glu-84 coordinates thiamine diphosphate. The tract at residues 474-554 (DFVGSAAYIL…AIGVIGNDAC (81 aa)) is thiamine pyrophosphate binding. 2 residues coordinate Mg(2+): Asp-525 and Asn-551.

It belongs to the TPP enzyme family. The cofactor is Mg(2+). Thiamine diphosphate serves as cofactor.

It localises to the endoplasmic reticulum membrane. The catalysed reaction is 2-hydroxyoctadecanoyl-CoA = heptadecanal + formyl-CoA. It carries out the reaction (2R)-hydroxyhexadecanoyl-CoA = pentadecanal + formyl-CoA. Endoplasmic reticulum 2-OH acyl-CoA lyase involved in the cleavage (C1 removal) reaction in the fatty acid alpha-oxydation in a thiamine pyrophosphate (TPP)-dependent manner. Involved in the phytosphingosine degradation pathway. The protein is 2-hydroxyacyl-CoA lyase 2 (ilvbl) of Xenopus laevis (African clawed frog).